The primary structure comprises 94 residues: Pyrimidine/purine nucleoside phosphorylase (94 aa).

Belongs to the nucleoside phosphorylase PpnP family.

It carries out the reaction a purine D-ribonucleoside + phosphate = a purine nucleobase + alpha-D-ribose 1-phosphate. The catalysed reaction is adenosine + phosphate = alpha-D-ribose 1-phosphate + adenine. The enzyme catalyses cytidine + phosphate = cytosine + alpha-D-ribose 1-phosphate. It catalyses the reaction guanosine + phosphate = alpha-D-ribose 1-phosphate + guanine. It carries out the reaction inosine + phosphate = alpha-D-ribose 1-phosphate + hypoxanthine. The catalysed reaction is thymidine + phosphate = 2-deoxy-alpha-D-ribose 1-phosphate + thymine. The enzyme catalyses uridine + phosphate = alpha-D-ribose 1-phosphate + uracil. It catalyses the reaction xanthosine + phosphate = alpha-D-ribose 1-phosphate + xanthine. In terms of biological role, catalyzes the phosphorolysis of diverse nucleosides, yielding D-ribose 1-phosphate and the respective free bases. Can use uridine, adenosine, guanosine, cytidine, thymidine, inosine and xanthosine as substrates. Also catalyzes the reverse reactions. The protein is Pyrimidine/purine nucleoside phosphorylase of Salmonella arizonae (strain ATCC BAA-731 / CDC346-86 / RSK2980).